A 1434-amino-acid polypeptide reads, in one-letter code: Protein patched homolog 1 (1434 aa).

Over residues 1–13 (MASAGNAAGALGR) the composition is skewed to low complexity. Residues 1–34 (MASAGNAAGALGRQAGGGRRRRTGGPHRAAPDRD) form a disordered region. Topologically, residues 1–86 (MASAGNAAGA…GCYIQKNCGK (86 aa)) are cytoplasmic. The chain crosses the membrane as a helical span at residues 87–107 (FLVVGLLIFGAFAVGLKAANL). Over 108–422 (ETNVEELWVE…LDDILKSFSD (315 aa)) the chain is Extracellular. N-linked (GlcNAc...) asparagine glycosylation is found at asparagine 127, asparagine 298, asparagine 335, and asparagine 400. The chain crosses the membrane as a helical span at residues 423 to 443 (VSVIRVASGYLLMLAYACLTM). The SSD domain maps to 424-584 (SVIRVASGYL…LLIFPAILSM (161 aa)). Topologically, residues 444-458 (LRWDCSKSQGAVGLA) are cytoplasmic. A helical transmembrane segment spans residues 459–479 (GVLLVALSVAAGLGLCSLIGI). The Extracellular segment spans residues 480–487 (SFNAATTQ). A helical transmembrane segment spans residues 488–508 (VLPFLALGVGVDDVFLLAHAF). Over 509–533 (SETGQNKRIPFEDRTGECLKRTGAS) the chain is Cytoplasmic. Residues 534–554 (VALTSISNVTAFFMAALIPIP) traverse the membrane as a helical segment. Residues 555-563 (ALRAFSLQA) are Extracellular-facing. The chain crosses the membrane as a helical span at residues 564 to 584 (AVVVVFNFAMVLLIFPAILSM). Residues 585–734 (DLYRREDRRL…HYAPFLLKPK (150 aa)) are Cytoplasmic-facing. A helical transmembrane segment spans residues 735-755 (AKVVVILLFLGLLGVSLYGTT). Residues 756-1013 (RVRDGLDLTD…WEQYISLRHW (258 aa)) are Extracellular-facing. N-linked (GlcNAc...) asparagine glycans are attached at residues asparagine 861 and asparagine 986. Residues 1014 to 1034 (LLLSISVVLACTFLVCAVFLL) traverse the membrane as a helical segment. The Cytoplasmic portion of the chain corresponds to 1035 to 1039 (NPWTA). The chain crosses the membrane as a helical span at residues 1040–1060 (GIIVMVLALMTVELFGMMGLI). At 1061–1069 (GIKLSAVPV) the chain is on the extracellular side. The chain crosses the membrane as a helical span at residues 1070-1090 (VILIASVGIGVEFTVHVALAF). Residues 1091 to 1107 (LTAIGDKNHRAMLALEH) are Cytoplasmic-facing. The chain crosses the membrane as a helical span at residues 1108–1128 (MFAPVLDGAVSTLLGVLMLAG). Topologically, residues 1129–1140 (SEFDFIVRYFFA) are extracellular. A helical transmembrane segment spans residues 1141-1161 (VLAILTVLGVLNGLVLLPVLL). Over 1162–1434 (SFFGPCPEVS…EERPWGSSSN (273 aa)) the chain is Cytoplasmic. Disordered stretches follow at residues 1175–1219 (GLNR…TVSG), 1257–1348 (HPDS…SSVP), and 1368–1396 (HPPPGPGRNPRGGPCPGYESYPETDHGVF). Threonine 1181 carries the phosphothreonine modification. A Phosphoserine modification is found at serine 1183. Residues 1204-1213 (SDSSDSEYSS) show a composition bias toward low complexity. The segment covering 1288 to 1297 (PRRDPPREGL) has biased composition (basic and acidic residues). Positions 1335 to 1348 (PRNPTSTAMGSSVP) are enriched in polar residues. Lysine 1413 is covalently cross-linked (Glycyl lysine isopeptide (Lys-Gly) (interchain with G-Cter in ubiquitin)).

This sequence belongs to the patched family. Interacts with SNX17. Interacts with IHH. Interacts with G-protein coupled receptor GPR37L1. Glycosylation is necessary for SHH binding. In terms of processing, in the absence of Hh ligands, ubiquitination by ITCH at Lys-1413 promotes endocytosis and both proteasomal and lysosomal degradation. Detected in cerebellar Bergmann glia cells (at protein level). In the developing embryo, first detected within the ventral neural tube and later in the somites and limb buds. Expression in the limb buds is restricted to the posterior ectoderm surrounding the zone of polarizing activity. In the adult, expression is seen in brain, lung, liver, kidney and ocular tissues; lower levels in heart, skeletal muscle, and testis.

Its subcellular location is the cell membrane. Acts as a receptor for sonic hedgehog (SHH), indian hedgehog (IHH) and desert hedgehog (DHH). Associates with the smoothened protein (SMO) to transduce the hedgehog's proteins signal. Seems to have a tumor suppressor function, as inactivation of this protein is probably a necessary, if not sufficient step for tumorigenesis. This Mus musculus (Mouse) protein is Protein patched homolog 1 (Ptch1).